We begin with the raw amino-acid sequence, 702 residues long: Elongation factor G (702 aa).

The 283-residue stretch at 8 to 290 (SRYRNIGISA…AIIEFLPAPN (283 aa)) folds into the tr-type G domain. GTP-binding positions include 17-24 (AHIDAGKT), 88-92 (DTPGH), and 142-145 (NKMD).

It belongs to the TRAFAC class translation factor GTPase superfamily. Classic translation factor GTPase family. EF-G/EF-2 subfamily.

It is found in the cytoplasm. In terms of biological role, catalyzes the GTP-dependent ribosomal translocation step during translation elongation. During this step, the ribosome changes from the pre-translocational (PRE) to the post-translocational (POST) state as the newly formed A-site-bound peptidyl-tRNA and P-site-bound deacylated tRNA move to the P and E sites, respectively. Catalyzes the coordinated movement of the two tRNA molecules, the mRNA and conformational changes in the ribosome. This chain is Elongation factor G, found in Buchnera aphidicola subsp. Acyrthosiphon pisum (strain 5A).